Here is a 1270-residue protein sequence, read N- to C-terminus: MVDSVGFAEAWRAQFPDSEPPRMELRSVGDIEQELERCKASIRRLEQEVNQERFRMIYLQTLLAKEKKSYDRQRWGFRRAAQPPDGAAEPRASAPRLPPAPADGADPAPVEESEARPDGEGSPSKGRPATARRPAAAAPADRDDRGPPTSVAALRSNFEKIRKGPAQPGSADAEKPFYVNVEFHHERGLVKVNDKEVSDRISSLGSQAMQMERKKSQQSAGQGLGEAPRPHYRGRSSESSCGLDGDYEDAELNPRFLKDNLINANGGNRPPWPPLEYQPYQSIYVGGMMVEGEGKSPLLRSQSTSEQEKRLTWPRRSYSPRSFEDSGGGYTPDCSSNENLTSSEEDFSSGQSSRVSPSPTTYRMFRDKSRSPSQNSQQSFDSSSPPTPQCQKRHRQCQVVVSEATIVGVRKTGQIWPSDGDSTFQGEADSSFGTPPGYGCAADQAEEQRRHQDGLPYIDDSPSSSPHLSSKGRGSPASGALEPTKASELDLEKGLEMRKWVLSGILASEETYLSHLEALLLPMKPLKAAATTSQPVLTSQQIETIFFKVPELYEIHKEFYDGLFPRVQQWSHQQRVGDLFQKLASQLGVYRAFVDNYGVAMETAEKCCQANAQFAEISENLRARSNKDVKDSTTKNSLETLLYKPVDRVTRSTLVLHDLLKHTPSSHPDHSLLQDALRISQNFLSSINEEITPRRQSMTVKKGEHRQLLKDSFMVELVEGARKLRHIFLFTDLLLCTKLKKQSGGKTQQYDCKWYIPLTDLSFQMVDELEALPNIPLVPDEELDALKIKISQIKSDIQREKRANKGSKVMERLRKKLSEQESLLLLMSPSMAFRVHSRNGKSYTFLISSDYERAEWRESIREQQKKCFKSFSLTSVELQMLTNSCVKLQTVHHIPLTINKEDDESPGLYGFLHAIVHSATGFKQSSNLYCTLEVDSFGYFVNKAKTRVYRDTTEPNWNEEFEIELEGSQTLRILCYEKCYNKMKMAKEDGESADKLMGKGQVQLDPQTLQDRDWQRTVIDMNGIEVKLSVKFTSREFSLKRMPSRKQTGVFGVKIAVVTKRERSKVPYIVRQCVEEIERRGMEEVGIYRVSGVATDIQALKAAFDVNNKDVSVMMSEMDVNAIAGTLKLYFRELPEPLFTDEFYPNFAEGIALSDPVAKESCMLNLLLSLPEANLLTFLFLLDHLKRVAEKETVNKMSLHNLATVFGPTLLRPSEKESKLPANPSQPITMTDSWSLEVMSQVQVLLYFLQLEAIPAPDSKRQSILFSTEV.

Residues 28-55 (VGDIEQELERCKASIRRLEQEVNQERFR) adopt a coiled-coil conformation. Disordered regions lie at residues 67–173 (KKSY…SADA), 201–249 (ISSL…DYED), 295–396 (KSPL…RHRQ), and 412–484 (TGQI…LEPT). Over residues 126–139 (GRPATARRPAAAAP) the composition is skewed to low complexity. Ser-216 and Ser-237 each carry phosphoserine. The residue at position 247 (Tyr-247) is a Phosphotyrosine. Composition is skewed to low complexity over residues 348 to 358 (SSGQSSRVSPS) and 371 to 384 (SPSQ…DSSS). Phosphoserine is present on residues Ser-358, Ser-379, and Ser-384. Position 387 is a phosphothreonine (Thr-387). Ser-461 and Ser-465 each carry phosphoserine. Arg-473 carries the omega-N-methylarginine modification. Residues Ser-475 and Ser-487 each carry the phosphoserine modification. The DH domain maps to 497–690 (MRKWVLSGIL…QNFLSSINEE (194 aa)). Position 553 is a phosphotyrosine (Tyr-553). Position 640 is a phosphothreonine (Thr-640). The residue at position 643 (Tyr-643) is a Phosphotyrosine. A Phosphothreonine modification is found at Thr-692. Positions 707–865 (QLLKDSFMVE…WRESIREQQK (159 aa)) constitute a PH domain. The region spanning 892–1019 (HHIPLTINKE…QDRDWQRTVI (128 aa)) is the C2 domain. The Rho-GAP domain maps to 1053–1247 (VKIAVVTKRE…VMSQVQVLLY (195 aa)). Ser-1263 bears the Phosphoserine mark.

As to quaternary structure, homotetramer. Interacts with PDZK1. May interact with CCPG1. Interacts with HCK, FES/FPS, ABL1, PIK3R1 and GRB2. Interacts with SH2D5. Interacts with DLG4. Autophosphorylated. Phosphorylated by FES/FPS on tyrosine residues, leading to down-regulation of the BCR kinase activity. Phosphorylation by HCK is important for interaction with GRB2. Expressed in brain, including the cortex, hippocampus, cerebellum, and brainstem, as well as the spinal cord (at protein level).

The protein resides in the postsynaptic density. It is found in the cell projection. It localises to the dendritic spine. The protein localises to the axon. Its subcellular location is the synapse. The catalysed reaction is L-seryl-[protein] + ATP = O-phospho-L-seryl-[protein] + ADP + H(+). It catalyses the reaction L-threonyl-[protein] + ATP = O-phospho-L-threonyl-[protein] + ADP + H(+). Protein with a unique structure having two opposing regulatory activities toward small GTP-binding proteins. The C-terminus is a GTPase-activating protein (GAP) domain which stimulates GTP hydrolysis by RAC1, RAC2 and CDC42. Accelerates the intrinsic rate of GTP hydrolysis of RAC1 or CDC42, leading to down-regulation of the active GTP-bound form. The central Dbl homology (DH) domain functions as guanine nucleotide exchange factor (GEF) that modulates the GTPases CDC42, RHOA and RAC1. Promotes the conversion of CDC42, RHOA and RAC1 from the GDP-bound to the GTP-bound form. The amino terminus contains an intrinsic kinase activity. Functions as an important negative regulator of neuronal RAC1 activity. Regulates macrophage functions such as CSF1-directed motility and phagocytosis through the modulation of RAC1 activity. Plays a major role as a RHOA GEF in keratinocytes being involved in focal adhesion formation and keratinocyte differentiation. The protein is Breakpoint cluster region protein of Rattus norvegicus (Rat).